The following is a 241-amino-acid chain: 6-phosphogluconolactonase (241 aa).

This sequence belongs to the glucosamine/galactosamine-6-phosphate isomerase family. 6-phosphogluconolactonase subfamily.

It catalyses the reaction 6-phospho-D-glucono-1,5-lactone + H2O = 6-phospho-D-gluconate + H(+). Its pathway is carbohydrate degradation; pentose phosphate pathway; D-ribulose 5-phosphate from D-glucose 6-phosphate (oxidative stage): step 2/3. In terms of biological role, hydrolysis of 6-phosphogluconolactone to 6-phosphogluconate. The protein is 6-phosphogluconolactonase (pgl) of Treponema pallidum (strain Nichols).